The chain runs to 241 residues: DNA repair protein RecO (241 aa).

This sequence belongs to the RecO family.

In terms of biological role, involved in DNA repair and RecF pathway recombination. This chain is DNA repair protein RecO, found in Rickettsia bellii (strain OSU 85-389).